We begin with the raw amino-acid sequence, 253 residues long: uncharacterized protein (253 aa).

The protein belongs to the MG439/MG440 family.

This is an uncharacterized protein from Mycoplasma pneumoniae (strain ATCC 29342 / M129 / Subtype 1) (Mycoplasmoides pneumoniae).